The primary structure comprises 303 residues: Acetylglutamate kinase (303 aa).

Substrate contacts are provided by residues 76 to 77 (GG), Arg-98, and Asn-199.

Belongs to the acetylglutamate kinase family. ArgB subfamily.

It is found in the cytoplasm. The enzyme catalyses N-acetyl-L-glutamate + ATP = N-acetyl-L-glutamyl 5-phosphate + ADP. It participates in amino-acid biosynthesis; L-arginine biosynthesis; N(2)-acetyl-L-ornithine from L-glutamate: step 2/4. Catalyzes the ATP-dependent phosphorylation of N-acetyl-L-glutamate. The sequence is that of Acetylglutamate kinase from Clavibacter michiganensis subsp. michiganensis (strain NCPPB 382).